The primary structure comprises 129 residues: Ig lambda-1 chain V region S43 (129 aa).

Positions 1-19 are cleaved as a signal peptide; it reads MAWISLILSLLALSSGAIS. At glutamine 20 the chain carries Pyrrolidone carboxylic acid. The Ig-like domain occupies 20 to 125; it reads QAVVTQESAL…HWVFGGGTKL (106 aa).

This is Ig lambda-1 chain V region S43 from Mus musculus (Mouse).